Consider the following 117-residue polypeptide: LYR motif-containing protein 1 (117 aa).

Belongs to the complex I LYR family.

This is LYR motif-containing protein 1 (lyrm1) from Dictyostelium discoideum (Social amoeba).